A 499-amino-acid chain; its full sequence is Glucose-6-phosphate exchanger SLC37A2 (499 aa).

The helical transmembrane segment at 21-40 (YRGFIIVMTFLFYTCYHMSR) threads the bilayer. N-linked (GlcNAc...) asparagine glycosylation is found at Asn53, Asn62, and Asn66. The next 11 membrane-spanning stretches (helical) occupy residues 86-106 (GSLD…SGIF), 116-136 (LSGG…GYYW), 138-158 (IHAL…QTTG), 187-207 (AVGN…AWGL), 208-228 (SFIV…FFLV), 302-322 (LCLL…PLYI), 334-354 (GDLS…AGGI), 362-382 (AITC…YNYL), 391-411 (VAML…ITTA), 434-454 (AIID…AGVL), and 458-478 (GWNY…LLLV).

The protein belongs to the major facilitator superfamily. Organophosphate:Pi antiporter (OPA) (TC 2.A.1.4) family.

It localises to the endoplasmic reticulum membrane. The enzyme catalyses D-glucose 6-phosphate(in) + phosphate(out) = D-glucose 6-phosphate(out) + phosphate(in). In terms of biological role, inorganic phosphate and glucose-6-phosphate antiporter. May transport cytoplasmic glucose-6-phosphate into the lumen of the endoplasmic reticulum and translocate inorganic phosphate into the opposite direction. This is Glucose-6-phosphate exchanger SLC37A2 from Xenopus tropicalis (Western clawed frog).